The chain runs to 316 residues: Ribosomal RNA small subunit methyltransferase H (316 aa).

Residues 35 to 37, aspartate 55, phenylalanine 84, aspartate 105, and glutamine 112 each bind S-adenosyl-L-methionine; that span reads AGH.

This sequence belongs to the methyltransferase superfamily. RsmH family.

Its subcellular location is the cytoplasm. It carries out the reaction cytidine(1402) in 16S rRNA + S-adenosyl-L-methionine = N(4)-methylcytidine(1402) in 16S rRNA + S-adenosyl-L-homocysteine + H(+). Specifically methylates the N4 position of cytidine in position 1402 (C1402) of 16S rRNA. This chain is Ribosomal RNA small subunit methyltransferase H, found in Streptococcus thermophilus (strain CNRZ 1066).